The following is a 625-amino-acid chain: DNA mismatch repair protein MutL (625 aa).

The protein belongs to the DNA mismatch repair MutL/HexB family.

This protein is involved in the repair of mismatches in DNA. It is required for dam-dependent methyl-directed DNA mismatch repair. May act as a 'molecular matchmaker', a protein that promotes the formation of a stable complex between two or more DNA-binding proteins in an ATP-dependent manner without itself being part of a final effector complex. The chain is DNA mismatch repair protein MutL from Bacteroides fragilis (strain YCH46).